Consider the following 352-residue polypeptide: Mas-related G-protein coupled receptor member X2 (352 aa).

Residues 1–45 (MEERNISGRDLRVDSNITYWGTNITAVNESNHTGMSFCEVVSCTM) lie on the Extracellular side of the membrane. 5 N-linked (GlcNAc...) asparagine glycosylation sites follow: Asn5, Asn16, Asn23, Asn28, and Asn31. The helical transmembrane segment at 46–66 (VFLSLIVALVGLVGNATVLWF) threads the bilayer. The Cytoplasmic portion of the chain corresponds to 67 to 75 (LGFQMRRNA). The chain crosses the membrane as a helical span at residues 76–96 (FSVYILNLAGADFLFICFQIG). Residues 97–107 (YCFHMILDIDS) lie on the Extracellular side of the membrane. Residues 108-128 (IPIEIDLFYLVVLNFPYFCGL) form a helical membrane-spanning segment. The Cytoplasmic segment spans residues 129-155 (SILSAISIERCLSVMWPIWYHCQRPRH). The chain crosses the membrane as a helical span at residues 156–176 (TSAVICTLLWVLSLVCSLLEG). The Extracellular segment spans residues 177-195 (KECGFLYYTSDPGWCKTFD). The chain crosses the membrane as a helical span at residues 196–216 (LITATWLIVLFVALLGSSLAL). Over 217 to 239 (VITIFWGLHKIPVTRLYVAIVFT) the chain is Cytoplasmic. A helical membrane pass occupies residues 240-260 (VLVFLLFGLPYGIYWFLLVWI). Topologically, residues 261–275 (EKFYYVLPCSIYPVT) are extracellular. A helical transmembrane segment spans residues 276-296 (VFLSCVNSSAKPIIYCLVGSI). The Cytoplasmic segment spans residues 297-347 (RHHRFQRKTLKLFLQRAMQDTPEEEECGEMGSSGRSREIKTIWKGLRAALI).

It belongs to the G-protein coupled receptor 1 family. Mas subfamily.

The protein resides in the cell membrane. Its function is as follows. Orphan receptor. Probably involved in the function of nociceptive neurons. May regulate nociceptor function and/or development, including the sensation or modulation of pain. This is Mas-related G-protein coupled receptor member X2 (Mrgprx2) from Mus musculus (Mouse).